A 55-amino-acid polypeptide reads, in one-letter code: ATP synthase F(0) complex subunit 8 (55 aa).

A helical transmembrane segment spans residues 7 to 24; that stretch reads APWFSIMIMTWLTLALLI. Positions 34-55 are disordered; it reads TNPPSSKPSLTTKPTPWAWPWT.

The protein belongs to the ATPase protein 8 family. Component of the ATP synthase complex composed at least of ATP5F1A/subunit alpha, ATP5F1B/subunit beta, ATP5MC1/subunit c (homooctomer), MT-ATP6/subunit a, MT-ATP8/subunit 8, ATP5ME/subunit e, ATP5MF/subunit f, ATP5MG/subunit g, ATP5MK/subunit k, ATP5MJ/subunit j, ATP5F1C/subunit gamma, ATP5F1D/subunit delta, ATP5F1E/subunit epsilon, ATP5PF/subunit F6, ATP5PB/subunit b, ATP5PD/subunit d, ATP5PO/subunit OSCP. ATP synthase complex consists of a soluble F(1) head domain (subunits alpha(3) and beta(3)) - the catalytic core - and a membrane F(0) domain - the membrane proton channel (subunits c, a, 8, e, f, g, k and j). These two domains are linked by a central stalk (subunits gamma, delta, and epsilon) rotating inside the F1 region and a stationary peripheral stalk (subunits F6, b, d, and OSCP).

It localises to the mitochondrion membrane. Its function is as follows. Subunit 8, of the mitochondrial membrane ATP synthase complex (F(1)F(0) ATP synthase or Complex V) that produces ATP from ADP in the presence of a proton gradient across the membrane which is generated by electron transport complexes of the respiratory chain. ATP synthase complex consist of a soluble F(1) head domain - the catalytic core - and a membrane F(1) domain - the membrane proton channel. These two domains are linked by a central stalk rotating inside the F(1) region and a stationary peripheral stalk. During catalysis, ATP synthesis in the catalytic domain of F(1) is coupled via a rotary mechanism of the central stalk subunits to proton translocation. In vivo, can only synthesize ATP although its ATP hydrolase activity can be activated artificially in vitro. Part of the complex F(0) domain. In Aythya americana (Redhead), this protein is ATP synthase F(0) complex subunit 8.